We begin with the raw amino-acid sequence, 333 residues long: MNIGQRYGWEFALAALLIIEILLFGIANPRMLDINILLLSTSDFICIGIVALPLTMVIVSGGIDISFGSTIGLCAISLGVMNQTGIPMAAAIPLTLLVGAICGIINAALILYTGINPLVITLGTLYLFGGSALLLSGISGATGYEGIGGFPPALTDFANLTLFGLPMPLMLFLLCVLICWLFMHRTHSGRNIFLIGQSSKVARYAAIPVARTLYLLYSLTGIASAIAAIVLVSYFGSARSDLGASFLMPAITAVVLGGANIYGGSGSIIGTALAILLIGYLQQGLQMAGVPSQVSSALAGALLIIAVVGRSISLHHHQIRDWIQRWRNQRLSS.

10 helical membrane-spanning segments follow: residues 7 to 27, 45 to 65, 70 to 90, 91 to 111, 118 to 138, 162 to 182, 212 to 232, 240 to 260, 261 to 281, and 288 to 308; these read YGWE…FGIA, ICIG…GIDI, TIGL…PMAA, AIPL…ALIL, LVIT…LSGI, LFGL…CWLF, TLYL…IVLV, SDLG…GGAN, IYGG…IGYL, and AGVP…IAVV.

The protein belongs to the binding-protein-dependent transport system permease family. AraH/RbsC subfamily. As to quaternary structure, the complex is composed of two ATP-binding proteins (LsrA), two transmembrane proteins (LsrC and LsrD) and a solute-binding protein (LsrB).

The protein localises to the cell inner membrane. Functionally, part of the ABC transporter complex LsrABCD involved in autoinducer 2 (AI-2) import. Probably responsible for the translocation of the substrate across the membrane. The chain is Autoinducer 2 import system permease protein LsrD (lsrD) from Photorhabdus laumondii subsp. laumondii (strain DSM 15139 / CIP 105565 / TT01) (Photorhabdus luminescens subsp. laumondii).